Consider the following 202-residue polypeptide: Methylthioribulose-1-phosphate dehydratase (202 aa).

2 residues coordinate Zn(2+): His-93 and His-95.

The protein belongs to the aldolase class II family. MtnB subfamily. It depends on Zn(2+) as a cofactor.

It catalyses the reaction 5-(methylsulfanyl)-D-ribulose 1-phosphate = 5-methylsulfanyl-2,3-dioxopentyl phosphate + H2O. It participates in amino-acid biosynthesis; L-methionine biosynthesis via salvage pathway; L-methionine from S-methyl-5-thio-alpha-D-ribose 1-phosphate: step 2/6. In terms of biological role, catalyzes the dehydration of methylthioribulose-1-phosphate (MTRu-1-P) into 2,3-diketo-5-methylthiopentyl-1-phosphate (DK-MTP-1-P). The sequence is that of Methylthioribulose-1-phosphate dehydratase from Klebsiella pneumoniae subsp. pneumoniae (strain ATCC 700721 / MGH 78578).